The sequence spans 103 residues: Stefin-2 (103 aa).

A Secondary area of contact motif is present at residues 52-56 (QVVQG).

This sequence belongs to the cystatin family.

The protein localises to the cytoplasm. Functionally, this is an intracellular thiol proteinase inhibitor. The sequence is that of Stefin-2 (Stfa2) from Mus musculus (Mouse).